A 95-amino-acid chain; its full sequence is Large ribosomal subunit protein uL23 (95 aa).

The protein belongs to the universal ribosomal protein uL23 family. As to quaternary structure, part of the 50S ribosomal subunit. Contacts protein L29, and trigger factor when it is bound to the ribosome.

Its function is as follows. One of the early assembly proteins it binds 23S rRNA. One of the proteins that surrounds the polypeptide exit tunnel on the outside of the ribosome. Forms the main docking site for trigger factor binding to the ribosome. In Desulfatibacillum aliphaticivorans, this protein is Large ribosomal subunit protein uL23.